We begin with the raw amino-acid sequence, 269 residues long: Gap junction gamma-3 protein (269 aa).

Residues 1–33 (MLLLELPIKCRMCGRFLRQLLAQESQHSTPVGR) are Extracellular-facing. Residues 34 to 54 (FLLPMLMGFRLLILVSSGPGV) traverse the membrane as a helical segment. The Cytoplasmic portion of the chain corresponds to 55–86 (FGNDENEFICHLGQPGCKTICYDVFRPLSPLR). A helical membrane pass occupies residues 87-107 (FWAFQVILMAVPSAIYVAFTL). Residues 108–145 (YHVIGYWEVPGKENKEQETQISKGDHSKDVSGAKSLKL) lie on the Extracellular side of the membrane. The helical transmembrane segment at 146–166 (LWAYVAHLGVRLALEGAALGV) threads the bilayer. Over 167-205 (QYNLYGFKMSSTFICREDPCIGSTTCFQSHPSEKTIFLN) the chain is Cytoplasmic. The helical transmembrane segment at 206–226 (IMFGISGACFLFIFLELALLG) threads the bilayer. Residues 227–269 (LGRFWRIYKHKLSFLKKLPTSESSVRSKDTTDELSVVEAKEPF) are Extracellular-facing. A Phosphoserine modification is found at S261.

It belongs to the connexin family. Gamma-type subfamily. As to quaternary structure, a connexon is composed of a hexamer of connexins. CNS specific. Expression is restricted to brain, spinal cord, and sciatic nerve.

The protein localises to the cell membrane. It localises to the cell junction. Its subcellular location is the gap junction. One gap junction consists of a cluster of closely packed pairs of transmembrane channels, the connexons, through which materials of low MW diffuse from one cell to a neighboring cell. This Mus musculus (Mouse) protein is Gap junction gamma-3 protein (Gjc3).